Consider the following 1622-residue polypeptide: DNA (cytosine-5)-methyltransferase 1 (1622 aa).

The segment at 1-145 (MPARTAPARV…RRSKSDSETM (145 aa)) is interaction with DNMT3A. Interaction with the PRC2/EED-EZH2 complex regions lie at residues 1–342 (MPAR…VERK) and 304–610 (TPEP…TVIN). Ser15 carries the post-translational modification Phosphoserine. The 94-residue stretch at 16–109 (PAGSLPDHVR…TQKANGCPAN (94 aa)) folds into the DMAP1-binding domain. N6,N6-dimethyllysine; by EHMT2 is present on Lys70. Residues 100–360 (TQKANGCPAN…IPKLNPPQCP (261 aa)) are disordered. The segment covering 126–137 (PRSRPKPRGPRR) has biased composition (basic residues). Position 138 is a phosphoserine (Ser138). Lys139 carries the post-translational modification N6-methyllysine; by SETD7. At Ser140 the chain carries Phosphoserine; by PKB/AKT1. The segment at 146–213 (IEASSSSVAT…TESRASRAGE (68 aa)) is interaction with DNMT3B. Ser149 and Ser151 each carry phosphoserine. The segment covering 149 to 166 (SSSSVATRRTTRQTTITS) has biased composition (low complexity). Thr163 bears the Phosphothreonine mark. The residue at position 169 (Lys169) is an N6-acetyllysine. The Nuclear localization signal motif lies at 173–200 (KRKPKEDSEKGNANESAAEERDQDKKRR). Basic and acidic residues-rich tracts occupy residues 176–197 (PKED…DQDK), 207–222 (RASR…ERVR), 237–269 (DDRR…THLD), and 276–300 (KDKR…KEEV). Residue Thr304 is modified to Phosphothreonine. Residues 327–556 (KPEPLSIPVQ…NVNRFTEDSL (230 aa)) form a DNA replication foci-targeting sequence region. The Zn(2+) site is built by Cys359 and Cys362. An N6-acetyllysine modification is found at Lys372. A Phosphoserine modification is found at Ser400. Zn(2+)-binding residues include Cys420 and His424. Ser515 and Ser555 each carry phosphoserine. Residues 650–696 (NTMKRRRCGVCEVCQQPECGKCKACKDMVKFGGTGRSKQACLKRRCP) form a CXXC-type zinc finger. Zn(2+)-binding residues include Cys657, Cys660, Cys663, Cys668, Cys671, Cys674, Cys690, and Cys695. An autoinhibitory linker region spans residues 697–758 (NLAVKEADED…TYYWKVSIDE (62 aa)). The segment at 702-733 (EADEDEEADDDIPELPSPKKLHQGKKKKQNKD) is disordered. The span at 703-714 (ADEDEEADDDIP) shows a compositional bias: acidic residues. Ser718 carries the phosphoserine modification. A compositionally biased stretch (basic residues) spans 720 to 731 (KKLHQGKKKKQN). Phosphoserine is present on Ser736. Residue Lys753 is modified to N6-acetyllysine. The BAH 1 domain maps to 759–884 (ETLEVGDCVS…QDYARFESPP (126 aa)). Ser882 carries the phosphoserine modification. 3 positions are modified to N6-acetyllysine: Lys895, Lys961, and Lys980. Positions 977–1105 (TYRKYSDYIK…SKTKSFEDPP (129 aa)) constitute a BAH 2 domain. The disordered stretch occupies residues 1099–1138 (KSFEDPPNHARSPGNKGKGKGKGKGKGKPQVSEPKEPEAA). Repeat copies occupy residues 1114–1115 (KG), 1116–1117 (KG), 1118–1119 (KG), 1120–1121 (KG), 1122–1123 (KG), and 1124–1125 (KG). The 7 X 2 AA tandem repeats of K-G stretch occupies residues 1114–1127 (KGKGKGKGKGKGKP). The span at 1115 to 1125 (GKGKGKGKGKG) shows a compositional bias: basic residues. An N6-acetyllysine mark is found at Lys1116, Lys1118, Lys1120, Lys1122, Lys1124, and Lys1126. Residues 1126 to 1127 (KP) form a 7; approximate repeat. An interaction with the PRC2/EED-EZH2 complex region spans residues 1126–1622 (KPQVSEPKEP…KGKEETTTED (497 aa)). Positions 1144–1603 (LRTLDVFSGC…LEIKLCLLAS (460 aa)) constitute an SAM-dependent MTase C5-type domain. The tract at residues 1144-1622 (LRTLDVFSGC…KGKEETTTED (479 aa)) is catalytic. S-adenosyl-L-methionine is bound by residues Ser1151, 1155–1156 (GL), 1173–1174 (EM), 1195–1196 (DC), and Cys1196. The active site involves Cys1231. Lys1354 is modified (N6-acetyllysine). A Phosphoserine modification is found at Ser1436. Residues Asn1582 and Val1584 each contribute to the S-adenosyl-L-methionine site. A Glycyl lysine isopeptide (Lys-Gly) (interchain with G-Cter in SUMO2) cross-link involves residue Lys1613.

Belongs to the class I-like SAM-binding methyltransferase superfamily. C5-methyltransferase family. Homodimer. Forms a stable complex with E2F1, BB1 and HDAC1. Forms a complex with DMAP1 and HDAC2, with direct interaction. Interacts with the PRC2/EED-EZH2 complex. Probably part of a corepressor complex containing ZNF304, TRIM28, SETDB1 and DNMT1. Interacts with UHRF1; promoting its recruitment to hemimethylated DNA. Interacts with USP7, promoting its deubiquitination. Interacts with PCNA. Interacts with MBD2 and MBD3. Interacts with DNMT3A and DNMT3B. Interacts with UBC9. Interacts with CSNK1D. Interacts with HDAC1. Interacts with BAZ2A/TIP5. Interacts with SIRT7. Interacts with ZNF263; recruited to the SIX3 promoter along with other proteins involved in chromatin modification and transcriptional corepression where it contributes to transcriptional repression. Interacts with L3MBTL3 and DCAF5; the interaction requires DNMT1 methylation at Lys-139 and is necessary to target DNMT1 for ubiquitination by the CRL4-DCAF5 E3 ubiquitin ligase complex and proteasomal degradation. Interacts with PHF20L1; the interaction requires DNMT1 methylation at Lys-139 and protects DNMT1 from ubiquitination and proteasomal degradation. In terms of processing, sumoylated; sumoylation increases activity. Post-translationally, acetylation on multiple lysines, mainly by KAT2B/PCAF, regulates cell cycle G(2)/M transition. Deacetylation of Lys-1116 and Lys-1354 by SIRT1 increases methyltransferase activity. Phosphorylation of Ser-151 by CDKs is important for enzymatic activity and protein stability. Phosphorylation of Ser-140 by AKT1 prevents methylation by SETD7 thereby increasing DNMT1 stability. In terms of processing, methylation at Lys-139 by SETD7 is necessary for the regulation of DNMT1 proteasomal degradation. Post-translationally, ubiquitinated by UHRF1; interaction with USP7 counteracts ubiquitination by UHRF1 by promoting deubiquitination and preventing degradation by the proteasome. Isoforms 0 and 8 are highly expressed in placenta, brain, lung, spleen, kidney, heart, and at much lower levels in liver. Isoform 1 is expressed in cerebellum, isoform 2 in muscle and testis, isoform 3 in lung, isoform 4 in spleen and brain, and isoform 5 in brain.

It is found in the nucleus. It carries out the reaction a 2'-deoxycytidine in DNA + S-adenosyl-L-methionine = a 5-methyl-2'-deoxycytidine in DNA + S-adenosyl-L-homocysteine + H(+). In terms of biological role, methylates CpG residues. Preferentially methylates hemimethylated DNA. Associates with DNA replication sites in S phase maintaining the methylation pattern in the newly synthesized strand, that is essential for epigenetic inheritance. Associates with chromatin during G2 and M phases to maintain DNA methylation independently of replication. It is responsible for maintaining methylation patterns established in development. DNA methylation is coordinated with methylation of histones. Mediates transcriptional repression by direct binding to HDAC2. In association with DNMT3B and via the recruitment of CTCFL/BORIS, involved in activation of BAG1 gene expression by modulating dimethylation of promoter histone H3 at H3K4 and H3K9. Probably forms a corepressor complex required for activated KRAS-mediated promoter hypermethylation and transcriptional silencing of tumor suppressor genes (TSGs) or other tumor-related genes in colorectal cancer (CRC) cells. Also required to maintain a transcriptionally repressive state of genes in undifferentiated embryonic stem cells (ESCs). Associates at promoter regions of tumor suppressor genes (TSGs) leading to their gene silencing. Promotes tumor growth. The protein is DNA (cytosine-5)-methyltransferase 1 (Dnmt1) of Rattus norvegicus (Rat).